The primary structure comprises 203 residues: Urease accessory protein UreG (203 aa).

GTP is bound at residue 14–21; it reads GPVGSGKT.

The protein belongs to the SIMIBI class G3E GTPase family. UreG subfamily. As to quaternary structure, homodimer. UreD, UreF and UreG form a complex that acts as a GTP-hydrolysis-dependent molecular chaperone, activating the urease apoprotein by helping to assemble the nickel containing metallocenter of UreC. The UreE protein probably delivers the nickel.

The protein resides in the cytoplasm. Its function is as follows. Facilitates the functional incorporation of the urease nickel metallocenter. This process requires GTP hydrolysis, probably effectuated by UreG. This Sinorhizobium medicae (strain WSM419) (Ensifer medicae) protein is Urease accessory protein UreG.